A 237-amino-acid chain; its full sequence is MDWLMGKSKAKPNGKKPAAEERKAYLEPEHTKARITDFQFKELVVLPREIDLNEWLASNTTTFFHHINLQYSTISEFCTGETCQTMAVCNTQYYWYDERGKKVKCTAPQYVDFVMSSVQKLVTDEDVFPTKYGREFPSSFESLVRKICRHLFHVLAHIYWAHFKETLALELHGHLNTLYVHFILFAREFNLLDPKETAIMDDLTEVLCSGAGGVHSGGSGDGAGSGGPGAQNHVKER.

Positions 1–21 (MDWLMGKSKAKPNGKKPAAEE) are disordered. Zn(2+)-binding residues include Cys78, Cys83, His157, and His162. Positions 217–229 (GGSGDGAGSGGPG) are enriched in gly residues. Residues 217 to 237 (GGSGDGAGSGGPGAQNHVKER) form a disordered region.

It belongs to the MOB1/phocein family. Binds STK38 and STK38L. In terms of processing, phosphorylated.

It is found in the nucleus. It localises to the cytoplasm. The protein resides in the perinuclear region. In terms of biological role, stimulates the autophosphorylation and kinase activity of STK38 and STK38L. This chain is MOB kinase activator 2 (MOB2), found in Homo sapiens (Human).